Here is a 524-residue protein sequence, read N- to C-terminus: Serine/threonine-protein phosphatase 2A 56 kDa regulatory subunit gamma isoform (524 aa).

M1 is modified (N-acetylmethionine). Residues 472 to 489 carry the Nuclear localization signal motif; sequence RKTVSDEARQAQKDPKKE. Residues 476–524 form a disordered region; it reads SDEARQAQKDPKKERPLARRKSELPQDPHTKKALEAHCRADELVPQDGR.

This sequence belongs to the phosphatase 2A regulatory subunit B56 family. As to quaternary structure, PP2A consists of a common heterodimeric core enzyme, composed of PPP2CA a 36 kDa catalytic subunit (subunit C) and PPP2R1A a 65 kDa constant regulatory subunit (PR65 or subunit A), that associates with a variety of regulatory subunits. Proteins that associate with the core dimer include three families of regulatory subunits B (the R2/B/PR55/B55, R3/B''/PR72/PR130/PR59 and R5/B'/B56 families), the 48 kDa variable regulatory subunit, viral proteins, and cell signaling molecules. Interacts with SGO1. Interacts with SGO1; the interaction is direct. May interact with TP53. Interacts with IER3 and/or ERK kinases; regulates ERK dephosphorylation Interacts with CIP2A; this interaction stabilizes CIP2A. In terms of tissue distribution, highly expressed in testis, heart and spleen. Also found in brain and skeletal muscle.

It localises to the nucleus. It is found in the chromosome. Its subcellular location is the centromere. The B regulatory subunit might modulate substrate selectivity and catalytic activity, and might also direct the localization of the catalytic enzyme to a particular subcellular compartment. The PP2A-PPP2R5C holoenzyme may activate TP53 and play a role in DNA damage-induced inhibition of cell proliferation. PP2A-PPP2R5C may also regulate the ERK signaling pathway through ERK dephosphorylation. The protein is Serine/threonine-protein phosphatase 2A 56 kDa regulatory subunit gamma isoform (PPP2R5C) of Oryctolagus cuniculus (Rabbit).